We begin with the raw amino-acid sequence, 183 residues long: Anterior gradient protein 1 (183 aa).

The N-terminal stretch at 1–18 (MQAGLSLVCLVLLCSALG) is a signal peptide.

It belongs to the AGR family. As to expression, from stage 18 (neurula) onward, expressed in the cement gland until it degenerates. More weakly expressed in the adjacent hatching gland.

The protein localises to the secreted. In terms of biological role, does not appear to be required for cement gland formation. The sequence is that of Anterior gradient protein 1 (ag1) from Xenopus laevis (African clawed frog).